Reading from the N-terminus, the 1761-residue chain is Lysine-specific demethylase 3B (1761 aa).

Ala2 carries the N-acetylalanine modification. The tract at residues 253–346 is disordered; the sequence is DNSAPQSEGG…QRAKQPPSTF (94 aa). Residues 298–309 show a composition bias toward basic and acidic residues; sequence ASKKLKGDRGEV. An N6-acetyllysine modification is found at Lys361. 2 disordered regions span residues 370 to 394 and 438 to 496; these read QDEP…QTPL and DTGL…NGVL. Polar residues-rich tracts occupy residues 380–392, 453–468, and 477–495; these read ASFT…TGQT, SRSQ…SILA, and PSSS…SNGV. Ser492, Ser546, Ser556, and Ser560 each carry phosphoserine. Residues 572-603 form a disordered region; that stretch reads RSVLGTDTKPGSKAGSSVDRKVPAESMPTLTP. The residue at position 614 (Thr614) is a Phosphothreonine. The tract at residues 714–762 is disordered; it reads GPSLSAMGNGRSSSPTSSLTQPIEMPTLSSSPTEERPTVGPGQQDNPLL. Residues 723 to 745 show a composition bias toward polar residues; the sequence is GRSSSPTSSLTQPIEMPTLSSSP. Residues Ser766, Ser773, Ser778, and Ser779 each carry the phosphoserine modification. Residue Lys788 forms a Glycyl lysine isopeptide (Lys-Gly) (interchain with G-Cter in SUMO2) linkage. Ser798 is subject to Phosphoserine. The disordered stretch occupies residues 805–827; sequence ACRQDSDSSTNSDLSDLSDSEEQ. The C6-type zinc finger occupies 1031-1056; that stretch reads CDVCETTLFNIHWVCRKCGFGVCLDC. Residues 1142-1161 show a composition bias toward polar residues; it reads GMSQLPSINPSASSGNETTF. The disordered stretch occupies residues 1142–1220; the sequence is GMSQLPSINP…PCPDTAPPSS (79 aa). Basic and acidic residues predominate over residues 1174–1193; the sequence is EPDHVPKADSTDIRSEEPLK. Residues 1194–1204 are compositionally biased toward polar residues; the sequence is TDSSASNSNSE. Ser1253 and Ser1259 each carry phosphoserine. The LXXLL motif signature appears at 1293 to 1297; the sequence is LRDLL. One can recognise a JmjC domain in the interval 1498 to 1721; it reads MPTRFEDLME…HCFRLTQEFR (224 aa). 3 residues coordinate Fe cation: His1560, Asp1562, and His1689.

The protein belongs to the JHDM2 histone demethylase family. Requires Fe(2+) as cofactor. As to expression, ubiquitous. Highly expressed in placenta, skeletal muscle, kidney, heart and liver.

It localises to the nucleus. The enzyme catalyses N(6),N(6)-dimethyl-L-lysyl(9)-[histone H3] + 2 2-oxoglutarate + 2 O2 = L-lysyl(9)-[histone H3] + 2 formaldehyde + 2 succinate + 2 CO2. In terms of biological role, histone demethylase that specifically demethylates 'Lys-9' of histone H3, thereby playing a central role in histone code. Demethylation of Lys residue generates formaldehyde and succinate. May have tumor suppressor activity. In Homo sapiens (Human), this protein is Lysine-specific demethylase 3B (KDM3B).